A 790-amino-acid polypeptide reads, in one-letter code: PAN2-PAN3 deadenylation complex subunit PAN3 (790 aa).

Disordered stretches follow at residues 166 to 191 (IAQQ…AVSA) and 235 to 259 (AMIS…ASPI). A compositionally biased stretch (low complexity) spans 168 to 191 (QQQPQHPQKQQQHPPSVGGGAVSA). Positions 369–655 (DAAEAAQHAL…SVTDLMPMIG (287 aa)) are pseudokinase domain. Residues R423, 472-479 (DYHPGSQT), and 552-553 (TK) each bind ATP. The stretch at 656–694 (ARFYTQLDALQSKIDMQEDELAKEMENGRLYRILVKLNS) forms a coiled coil. The interval 695 to 790 (INERPDFNLD…FSELMSSAAN (96 aa)) is knob domain.

Belongs to the protein kinase superfamily. PAN3 family. As to quaternary structure, homodimer. Forms a heterotrimer with a catalytic subunit PAN2 to form the poly(A)-nuclease (PAN) deadenylation complex. Interacts (via PAM-2 motif) with poly(A)-binding protein (via PABC domain), conferring substrate specificity of the enzyme complex. Interacts with the GW182 family protein gw. Interacts with Gyf.

The protein localises to the cytoplasm. The protein resides in the P-body. Its function is as follows. Regulatory subunit of the poly(A)-nuclease (PAN) deadenylation complex, one of two cytoplasmic mRNA deadenylases involved in general and miRNA-mediated mRNA turnover. PAN specifically shortens poly(A) tails of RNA and the activity is stimulated by poly(A)-binding protein (PABP). PAN deadenylation is followed by rapid degradation of the shortened mRNA tails by the CCR4-NOT complex. Deadenylated mRNAs are then degraded by two alternative mechanisms, namely exosome-mediated 3'-5' exonucleolytic degradation, or deadenylation-dependent mRNA decaping and subsequent 5'-3' exonucleolytic degradation by XRN1. PAN3 acts as a positive regulator for PAN activity, recruiting the catalytic subunit PAN2 to mRNA via its interaction with RNA and PABP, and to miRNA targets via its interaction with GW182 family proteins. The chain is PAN2-PAN3 deadenylation complex subunit PAN3 from Drosophila melanogaster (Fruit fly).